The following is a 439-amino-acid chain: 5-methylthioadenosine/S-adenosylhomocysteine deaminase (439 aa).

2 residues coordinate Zn(2+): His70 and His72. Positions 99 and 192 each coordinate substrate. His219 lines the Zn(2+) pocket. Residues Glu222 and Asp307 each coordinate substrate. Asp307 is a binding site for Zn(2+).

This sequence belongs to the metallo-dependent hydrolases superfamily. MTA/SAH deaminase family. Zn(2+) is required as a cofactor.

The catalysed reaction is S-adenosyl-L-homocysteine + H2O + H(+) = S-inosyl-L-homocysteine + NH4(+). The enzyme catalyses S-methyl-5'-thioadenosine + H2O + H(+) = S-methyl-5'-thioinosine + NH4(+). Its function is as follows. Catalyzes the deamination of 5-methylthioadenosine and S-adenosyl-L-homocysteine into 5-methylthioinosine and S-inosyl-L-homocysteine, respectively. Is also able to deaminate adenosine. The sequence is that of 5-methylthioadenosine/S-adenosylhomocysteine deaminase from Thermodesulfovibrio yellowstonii (strain ATCC 51303 / DSM 11347 / YP87).